The following is a 373-amino-acid chain: Putative protein YfkA (373 aa).

The region spanning 26 to 256 (YGDMQLTNVE…DIRDENTWML (231 aa)) is the Radical SAM core domain. [4Fe-4S] cluster contacts are provided by Cys42, Cys46, and Cys49.

It belongs to the radical SAM superfamily. It depends on [4Fe-4S] cluster as a cofactor.

In Bacillus subtilis (strain 168), this protein is Putative protein YfkA (yfkA).